The chain runs to 138 residues: uncharacterized protein (138 aa).

Positions 17 to 38 form a DNA-binding region, H-T-H motif; sequence LCRNDVAHEAGTNNVQIMRIEK.

This is an uncharacterized protein from Herpetosiphon aurantiacus (Herpetosiphon giganteus).